The sequence spans 473 residues: Inactive levansucrase (473 aa).

An N-terminal signal peptide occupies residues Met1–Ala29.

It belongs to the glycosyl hydrolase 68 family.

Its subcellular location is the secreted. In Geobacillus stearothermophilus (Bacillus stearothermophilus), this protein is Inactive levansucrase (sacB).